We begin with the raw amino-acid sequence, 20 residues long: Cytochrome P450 3A5 (20 aa).

Belongs to the cytochrome P450 family. Heme serves as cofactor.

The protein resides in the endoplasmic reticulum membrane. It localises to the microsome membrane. The catalysed reaction is an organic molecule + reduced [NADPH--hemoprotein reductase] + O2 = an alcohol + oxidized [NADPH--hemoprotein reductase] + H2O + H(+). Functionally, 6-beta-testosterone hydroxylase. The polypeptide is Cytochrome P450 3A5 (Papio sp. (Baboon)).